We begin with the raw amino-acid sequence, 514 residues long: Peptide chain release factor 3 (514 aa).

A tr-type G domain is found at 8 to 268 (KKRRTFAIIS…TFLKFAPEPH (261 aa)). GTP-binding positions include 17 to 24 (SHPDAGKT), 85 to 89 (DTPGH), and 139 to 142 (NKLD).

It belongs to the TRAFAC class translation factor GTPase superfamily. Classic translation factor GTPase family. PrfC subfamily.

Its subcellular location is the cytoplasm. Functionally, increases the formation of ribosomal termination complexes and stimulates activities of RF-1 and RF-2. It binds guanine nucleotides and has strong preference for UGA stop codons. It may interact directly with the ribosome. The stimulation of RF-1 and RF-2 is significantly reduced by GTP and GDP, but not by GMP. This Streptococcus thermophilus (strain CNRZ 1066) protein is Peptide chain release factor 3.